Consider the following 395-residue polypeptide: Argininosuccinate synthase (395 aa).

Residues 10 to 18 (AYSGGLDTS) and A37 each bind ATP. L-citrulline-binding residues include Y88 and S93. Residue G118 participates in ATP binding. 3 residues coordinate L-aspartate: T120, N124, and D125. L-citrulline is bound at residue N124. Residues R128, S179, S188, E264, and Y276 each coordinate L-citrulline.

It belongs to the argininosuccinate synthase family. Type 1 subfamily. Homotetramer.

Its subcellular location is the cytoplasm. It catalyses the reaction L-citrulline + L-aspartate + ATP = 2-(N(omega)-L-arginino)succinate + AMP + diphosphate + H(+). Its pathway is amino-acid biosynthesis; L-arginine biosynthesis; L-arginine from L-ornithine and carbamoyl phosphate: step 2/3. The chain is Argininosuccinate synthase from Pelagibacter ubique (strain HTCC1062).